We begin with the raw amino-acid sequence, 234 residues long: 2,3-bisphosphoglycerate-dependent phosphoglycerate mutase (234 aa).

Substrate is bound by residues 8-15 (RHGESVWN), 21-22 (TG), arginine 60, 87-90 (ERHY), lysine 98, 114-115 (RR), and 183-184 (GN). The Tele-phosphohistidine intermediate role is filled by histidine 9. Glutamate 87 acts as the Proton donor/acceptor in catalysis.

This sequence belongs to the phosphoglycerate mutase family. BPG-dependent PGAM subfamily. As to quaternary structure, homodimer.

The catalysed reaction is (2R)-2-phosphoglycerate = (2R)-3-phosphoglycerate. It functions in the pathway carbohydrate degradation; glycolysis; pyruvate from D-glyceraldehyde 3-phosphate: step 3/5. In terms of biological role, catalyzes the interconversion of 2-phosphoglycerate and 3-phosphoglycerate. The sequence is that of 2,3-bisphosphoglycerate-dependent phosphoglycerate mutase from Geobacter sp. (strain M21).